The following is a 150-amino-acid chain: General odorant-binding protein 19d (150 aa).

An N-terminal signal peptide occupies residues 1 to 23 (MSHLVHLTVLLLVGILCLGATSA). Disulfide bonds link C41–C72, C68–C126, and C116–C135.

The protein belongs to the PBP/GOBP family. Expressed in the antenna, mostly on the anterior surface of the third antennal segment. Also detected in the maxillary palps and in cells at the bases of the taste hairs on the proboscis and internal taste organs of the head.

Its subcellular location is the secreted. This is General odorant-binding protein 19d (Obp19d) from Drosophila melanogaster (Fruit fly).